The chain runs to 1023 residues: Sodium/potassium-transporting ATPase subunit alpha-1 (1023 aa).

The propeptide occupies 1-5; that stretch reads MGKGV. The segment covering 1–11 has biased composition (basic and acidic residues); the sequence is MGKGVGRDKYE. Residues 1–38 are disordered; that stretch reads MGKGVGRDKYEPAAVSEHGDKKSKKAKKERDMDELKKE. Residues 6–87 are Cytoplasmic-facing; the sequence is GRDKYEPAAV…NALTPPPTTP (82 aa). K9 is modified (N6-acetyllysine). Position 10 is a phosphotyrosine (Y10). S16 carries the post-translational modification Phosphoserine; by PKC. The residue at position 21 (K21) is an N6-acetyllysine. The residue at position 23 (S23) is a Phosphoserine; by PKC. Basic and acidic residues predominate over residues 28-38; sequence KERDMDELKKE. Phosphoserine occurs at positions 40 and 47. The phosphoinositide-3 kinase binding stretch occupies residues 82-84; it reads PPP. Residues 88-108 traverse the membrane as a helical segment; it reads EWVKFCRQLFGGFSMLLWIGA. Residues 109-131 lie on the Extracellular side of the membrane; the sequence is ILCFLAYGIRSATEEEPPNDDLY. A helical membrane pass occupies residues 132-152; it reads LGVVLSAVVIITGCFSYYQEA. At 153–288 the chain is on the cytoplasmic side; sequence KSSKIMESFK…GGQTPIAEEI (136 aa). A disordered region spans residues 216 to 235; it reads SSLTGESEPQTRSPDFTNEN. Residue S228 is modified to Phosphoserine. Y260 carries the post-translational modification Phosphotyrosine. The chain crosses the membrane as a helical span at residues 289–308; the sequence is EHFIHLITGVAVFLGVSFFI. The Extracellular portion of the chain corresponds to 309–320; sequence LSLILEYTWLEA. A helical membrane pass occupies residues 321–338; it reads VIFLIGIIVANVPEGLLA. The Cytoplasmic portion of the chain corresponds to 339-772; it reads TVTVCLTLTA…EEGRLIFDNL (434 aa). The 4-aspartylphosphate intermediate role is filled by D376. 2 positions are modified to phosphoserine: S452 and S484. Position 487 (K487) interacts with ATP. Y542 carries the phosphotyrosine modification. The interval 596 to 717 is mediates interaction with SCN7A; it reads RAAVPDAVGK…QGAIVAVTGD (122 aa). N6-succinyllysine is present on K661. Phosphoserine is present on residues S668 and S675. 2 residues coordinate Mg(2+): D717 and D721. Residues 773–792 traverse the membrane as a helical segment; it reads KKSIAYTLTSNIPEITPFLI. Topologically, residues 793–802 are extracellular; it reads FIIANIPLPL. Residues 803-823 form a helical membrane-spanning segment; the sequence is GTVTILCIDLGTDMVPAISLA. At 824 to 843 the chain is on the cytoplasmic side; sequence YEQAESDIMKRQPRNPKTDK. Residues 844–866 traverse the membrane as a helical segment; the sequence is LVNERLISMAYGQIGMIQALGGF. The Extracellular portion of the chain corresponds to 867–918; it reads FTYFVILAENGFLPFHLLGIRETWDDRWINDVEDSYGQQWTYEQRKIVEFTC. A helical transmembrane segment spans residues 919–938; the sequence is HTAFFVSIVVVQWADLVICK. Topologically, residues 939-951 are cytoplasmic; the sequence is TRRNSVFQQGMKN. Phosphoserine; by PKA is present on S943. The helical transmembrane segment at 952-970 threads the bilayer; that stretch reads KILIFGLFEETALAAFLSY. Topologically, residues 971–985 are extracellular; sequence CPGMGAALRMYPLKP. Residues 986-1006 form a helical membrane-spanning segment; that stretch reads TWWFCAFPYSLLIFVYDEVRK. The Cytoplasmic segment spans residues 1007–1023; it reads LIIRRRPGGWVEKETYY.

The protein belongs to the cation transport ATPase (P-type) (TC 3.A.3) family. Type IIC subfamily. As to quaternary structure, the sodium/potassium-transporting ATPase is composed of a catalytic alpha subunit, an auxiliary non-catalytic beta subunit and an additional regulatory subunit. Interacts with regulatory subunit FXYD1. Interacts with regulatory subunit FXYD3. Interacts with SLC35G1 and STIM1. Interacts with SIK1. Interacts with CLN3; this interaction regulates the sodium/potassium-transporting ATPase complex localization at the plasma membrane. Interacts with SCN7A; activates ATP1A1 P-type sodium:potassium-exchanging transporter activity which indirectly signals to nearby neurons to regulate sodium homeostasis. Phosphorylation on Tyr-10 modulates pumping activity. Phosphorylation of Ser-943 by PKA modulates the response of ATP1A1 to PKC. Dephosphorylation by protein phosphatase 2A (PP2A) following increases in intracellular sodium, leading to increase catalytic activity. In terms of tissue distribution, expressed in the central nervous system, in most motor and sensory axons of the ventral and dorsal roots, as well as in the large motor neurons of the ventral horn (at protein level).

The protein localises to the cell membrane. It is found in the basolateral cell membrane. The protein resides in the sarcolemma. It localises to the cell projection. Its subcellular location is the axon. The protein localises to the melanosome. The enzyme catalyses K(+)(out) + Na(+)(in) + ATP + H2O = K(+)(in) + Na(+)(out) + ADP + phosphate + H(+). Functionally, this is the catalytic component of the active enzyme, which catalyzes the hydrolysis of ATP coupled with the exchange of sodium and potassium ions across the plasma membrane. This action creates the electrochemical gradient of sodium and potassium ions, providing the energy for active transport of various nutrients. Could also be part of an osmosensory signaling pathway that senses body-fluid sodium levels and controls salt intake behavior as well as voluntary water intake to regulate sodium homeostasis. The sequence is that of Sodium/potassium-transporting ATPase subunit alpha-1 (Atp1a1) from Rattus norvegicus (Rat).